A 1094-amino-acid polypeptide reads, in one-letter code: MSSNSFPYNEQSGGGEATELGQEATSTISPSGAFGLFSSDLKKNEDLKQMLESNKDSAKLDAMKRIVGMIAKGKNASELFPAVVKNVASKNIEIKKLVYVYLVRYAEEQQDLALLSISTFQRALKDPNQLIRASALRVLSSIRVPIIVPIMMLAIKEASADLSPYVRKNAAHAIQKLYSLDPEQKEMLIEVIEKLLKDKSTLVAGSVVMAFEEVCPDRIDLIHKNYRKLCNLLVDVEEWGQVVIIHMLTRYARTQFVSPWKEGDELEDNGKNFYESDDDQKEKTDKKKKPYTMDPDHRLLIRNTKPLLQSRNAAVVMAVAQLYWHISPKSEAGIISKSLVRLLRSNREVQYIVLQNIATMSIQRKGMFEPYLKSFYVRSTDPTMIKTLKLEILTNLANEANISTLLREFQTYVKSQDKQFAAATIQTIGRCATNILEVTDTCLNGLVCLLSNRDEIVVAESVVVIKKLLQMQPAQHGEIIKHMAKLLDSITVPVARASILWLIGENCERVPKIAPDVLRKMAKSFTSEDDLVKLQILNLGAKLYLTNSKQTKLLTQYILNLGKYDQNYDIRDRTRFIRQLIVPNVKSGALSKYAKKIFLAQKPAPLLESPFKDRDHFQLGTLSHTLNIKATGYLELSNWPEVAPDPSVRNVEVIELAKEWTPAGKAKQENSAKKFYSESEEEEDSSDSSSDSESESGSESGEQGESGEEGDSNEDSSEDSSSEQDSESGRESGLENKRTAKRNSKAKGKSDSEDGEKENEKSKTSDSSNDESSSIEDSSSDSESESEPESESESRRVTKEKEKKTKQDRTPLTKDVSLLDLDDFNPVSTPVALPTPALSPSLMADLEGLHLSTSSSVISVSTPAFVPTKTHVLLHRMSGKGLAAHYFFPRQPCIFGDKMVSIQITLNNTTDRKIENIHIGEKKLPIGMKMHVFNPIDSLEPEGSITVSMGIDFCDSTQTASFQLCTKDDCFNVNIQPPVGELLLPVAMSEKDFKKEQGVLTGMNETSAVIIAAPQNFTPSVIFQKVVNVANVGAVPSGQDNIHRFAAKTVHSGSLMLVTVELKEGSTAQLIINTEKTVIGSVLLRELKPVLSQG.

Residues Met1–Gln11 show a composition bias toward polar residues. 2 disordered regions span residues Met1–Ser31 and Asp268–Thr292. Phosphoserine is present on residues Ser276 and Ser609. Residues Pro662–Pro811 form a disordered region. Positions Ala666–Ser677 are enriched in basic and acidic residues. Composition is skewed to acidic residues over residues Glu678 to Ser696 and Glu705 to Ser726. Composition is skewed to basic and acidic residues over residues Glu727–Arg738 and Gly748–Thr764. Phosphoserine occurs at positions 750 and 752. The span at Ser765–Asp777 shows a compositional bias: low complexity. A compositionally biased stretch (acidic residues) spans Ser778–Glu791. The span at Ser792–Pro811 shows a compositional bias: basic and acidic residues.

This sequence belongs to the adaptor complexes large subunit family. Adaptor protein complex 3 (AP-3) is a heterotetramer composed of two large adaptins (delta-type subunit AP3D1 and beta-type subunit AP3B1 or AP3B2), a medium adaptin (mu-type subunit AP3M1 or AP3M2) and a small adaptin (sigma-type subunit APS1 or AP3S2). AP-3 associates with the BLOC-1 complex. Interacts with KIF3A; interaction is direct; interaction is impaired by pyrophosphorylation of AP3B1. In terms of processing, phosphorylated on serine residues. Post-translationally, pyrophosphorylation by 5-diphosphoinositol pentakisphosphate (5-IP7) impairs interaction with KIF3A. Serine pyrophosphorylation is achieved by Mg(2+)-dependent, but enzyme independent transfer of a beta-phosphate from a inositol pyrophosphate to a pre-phosphorylated serine residue. As to expression, ubiquitously expressed.

The protein resides in the cytoplasmic vesicle. It is found in the clathrin-coated vesicle membrane. It localises to the golgi apparatus. In terms of biological role, subunit of non-clathrin- and clathrin-associated adaptor protein complex 3 (AP-3) that plays a role in protein sorting in the late-Golgi/trans-Golgi network (TGN) and/or endosomes. The AP complexes mediate both the recruitment of clathrin to membranes and the recognition of sorting signals within the cytosolic tails of transmembrane cargo molecules. AP-3 appears to be involved in the sorting of a subset of transmembrane proteins targeted to lysosomes and lysosome-related organelles. In concert with the BLOC-1 complex, AP-3 is required to target cargos into vesicles assembled at cell bodies for delivery into neurites and nerve terminals. This is AP-3 complex subunit beta-1 (AP3B1) from Homo sapiens (Human).